The chain runs to 93 residues: Cell division topological specificity factor (93 aa).

Belongs to the MinE family.

Functionally, prevents the cell division inhibition by proteins MinC and MinD at internal division sites while permitting inhibition at polar sites. This ensures cell division at the proper site by restricting the formation of a division septum at the midpoint of the long axis of the cell. This Methylococcus capsulatus (strain ATCC 33009 / NCIMB 11132 / Bath) protein is Cell division topological specificity factor.